A 295-amino-acid chain; its full sequence is G1/S-specific cyclin-D1 (295 aa).

One can recognise a Cyclin N-terminal domain in the interval 28 to 152; sequence LRAMLKTEET…LLVNKLKWNL (125 aa). Positions 262–283 are disordered; sequence AQQNVDPKATEEEGEVEEEAGL. Residue K269 forms a Glycyl lysine isopeptide (Lys-Gly) (interchain with G-Cter in ubiquitin) linkage. T286 carries the post-translational modification Phosphothreonine.

Belongs to the cyclin family. Cyclin D subfamily. As to quaternary structure, interacts with either CDK4 or CDK6 protein kinase to form a serine/threonine kinase holoenzyme complex. The cyclin subunit imparts substrate specificity to the complex. Component of the ternary complex CCND1/CDK4/CDKN1B required for nuclear translocation and modulation of CDK4-mediated kinase activity. Interacts directly with CDKN1B. Can form similar complexes with either CDKN1A or CDKN2A. Interacts with UHRF2; the interaction ubiquitinates CCND1 and appears to occur independently of phosphorylation. Interacts with USP2. Interacts (via cyclin N-terminal domain) with INSM1 (via N-terminal region); the interaction competes with the binding of CCND1 to CDK4 during cell cycle progression and inhibits CDK4 activity. Interacts with CDK4; the interaction is prevented with the binding of CCND1 to INSM1 during cell cycle progression. Phosphorylation at Thr-286 by MAP kinases is required for ubiquitination and degradation by the DCX(AMBRA1) complex. It also plays an essential role for recognition by the FBXO31 component of SCF (SKP1-cullin-F-box) protein ligase complex following DNA damage. Post-translationally, ubiquitinated at Lys-269 by the DCX(AMBRA1) complex during the transition from G1 to S cell phase, leading to its degradation: ubiquitination is dependent on Thr-286 phosphorylation. The DCX(AMBRA1) complex represents the major regulator of CCND1 stability during the G1/S transition. Also ubiquitinated by the SCF(FBXO4) and Cul7-RING(FBXW8) ubiquitin-protein ligase complexes. Following DNA damage it is ubiquitinated by the SCF(FBXO31) protein ligase complex. SCF(FBXO31) ubiquitination is dependent on Thr-286 phosphorylation. Ubiquitinated also by UHRF2 apparently in a phosphorylation-independent manner. Ubiquitination leads to its degradation and G1 arrest. Deubiquitinated by USP2; leading to its stabilization. Expressed in the intestinal epithelium.

Its subcellular location is the nucleus. The protein resides in the cytoplasm. It is found in the nucleus membrane. Regulatory component of the cyclin D1-CDK4 (DC) complex that phosphorylates and inhibits members of the retinoblastoma (RB) protein family including RB1 and regulates the cell-cycle during G(1)/S transition. Phosphorylation of RB1 allows dissociation of the transcription factor E2F from the RB/E2F complex and the subsequent transcription of E2F target genes which are responsible for the progression through the G(1) phase. Hypophosphorylates RB1 in early G(1) phase. Cyclin D-CDK4 complexes are major integrators of various mitogenenic and antimitogenic signals. Also a substrate for SMAD3, phosphorylating SMAD3 in a cell-cycle-dependent manner and repressing its transcriptional activity. Component of the ternary complex, cyclin D1/CDK4/CDKN1B, required for nuclear translocation and activity of the cyclin D-CDK4 complex. Exhibits transcriptional corepressor activity with INSM1 on the NEUROD1 and INS promoters in a cell cycle-independent manner. The protein is G1/S-specific cyclin-D1 (Ccnd1) of Mus musculus (Mouse).